Reading from the N-terminus, the 1393-residue chain is DNA-directed RNA polymerase subunit beta' (1393 aa).

Positions 72, 74, 87, and 90 each coordinate Zn(2+). Asp463, Asp465, and Asp467 together coordinate Mg(2+). Residues Cys812, Cys887, Cys894, and Cys897 each contribute to the Zn(2+) site.

Belongs to the RNA polymerase beta' chain family. In terms of assembly, the RNAP catalytic core consists of 2 alpha, 1 beta, 1 beta' and 1 omega subunit. When a sigma factor is associated with the core the holoenzyme is formed, which can initiate transcription. It depends on Mg(2+) as a cofactor. The cofactor is Zn(2+).

It carries out the reaction RNA(n) + a ribonucleoside 5'-triphosphate = RNA(n+1) + diphosphate. Functionally, DNA-dependent RNA polymerase catalyzes the transcription of DNA into RNA using the four ribonucleoside triphosphates as substrates. This is DNA-directed RNA polymerase subunit beta' from Chlamydia abortus (strain DSM 27085 / S26/3) (Chlamydophila abortus).